Consider the following 145-residue polypeptide: Large-conductance mechanosensitive channel (145 aa).

3 helical membrane passes run 14–34, 38–58, and 81–101; these read VMDLAVGVIIGGAFGGIVKSL, LIMPIVGAIFGGFDFSNYFLP, and GSFLTVLINFLILAWIIFLMV.

The protein belongs to the MscL family. Homopentamer.

The protein resides in the cell inner membrane. Functionally, channel that opens in response to stretch forces in the membrane lipid bilayer. May participate in the regulation of osmotic pressure changes within the cell. The polypeptide is Large-conductance mechanosensitive channel (Rhizobium leguminosarum bv. trifolii (strain WSM2304)).